The following is a 356-amino-acid chain: Alanine racemase (356 aa).

Lysine 35 acts as the Proton acceptor; specific for D-alanine in catalysis. Lysine 35 is subject to N6-(pyridoxal phosphate)lysine. Arginine 130 serves as a coordination point for substrate. The Proton acceptor; specific for L-alanine role is filled by tyrosine 253. Residue methionine 301 coordinates substrate.

Belongs to the alanine racemase family. It depends on pyridoxal 5'-phosphate as a cofactor.

It carries out the reaction L-alanine = D-alanine. It participates in amino-acid biosynthesis; D-alanine biosynthesis; D-alanine from L-alanine: step 1/1. Its function is as follows. Catalyzes the interconversion of L-alanine and D-alanine. May also act on other amino acids. The chain is Alanine racemase (alr) from Paraburkholderia phytofirmans (strain DSM 17436 / LMG 22146 / PsJN) (Burkholderia phytofirmans).